A 118-amino-acid chain; its full sequence is MARVKRGVIARARHKKILKQAKGYYGARSRVYRVAFQAVIKAGQYAYRDRRQRKRQFRQLWIARINAAARQNGISYSKFINGLKKASVEIDRKILADIAVFDKVAFSALVEKAKAALA.

This sequence belongs to the bacterial ribosomal protein bL20 family.

Functionally, binds directly to 23S ribosomal RNA and is necessary for the in vitro assembly process of the 50S ribosomal subunit. It is not involved in the protein synthesizing functions of that subunit. The polypeptide is Large ribosomal subunit protein bL20 (Salmonella arizonae (strain ATCC BAA-731 / CDC346-86 / RSK2980)).